A 279-amino-acid chain; its full sequence is Dehydrogenase/reductase SDR family member 4 (279 aa).

Residue 37–61 (LVTASTDGIGFAIARRLAEDGAHVV) coordinates NADP(+). Position 93 is an N6-acetyllysine; alternate (lysine 93). Position 93 is an N6-succinyllysine; alternate (lysine 93). Position 106 is an N6-acetyllysine (lysine 106). Position 170 (serine 170) interacts with substrate. Tyrosine 183 acts as the Proton acceptor in catalysis. Lysine 187 provides a ligand contact to NADP(+). Residue lysine 217 is modified to N6-acetyllysine; alternate. Lysine 217 is modified (N6-succinyllysine; alternate). Serine 221 carries the phosphoserine modification. N6-succinyllysine is present on residues lysine 228 and lysine 235. Residues 277-279 (SRL) carry the Peroxisomal targeting signal motif.

This sequence belongs to the short-chain dehydrogenases/reductases (SDR) family. In terms of assembly, homotetramer.

It localises to the peroxisome. The catalysed reaction is a secondary alcohol + NADP(+) = a ketone + NADPH + H(+). The enzyme catalyses 3alpha-hydroxy-5beta-pregnan-20-one + NADP(+) = 5beta-pregnan-3,20-dione + NADPH + H(+). It catalyses the reaction 5beta-dihydrotestosterone + NADPH + H(+) = 5beta-androstane-3alpha,17beta-diol + NADP(+). It carries out the reaction all-trans-retinol + NADP(+) = all-trans-retinal + NADPH + H(+). The catalysed reaction is isatin + NADPH + H(+) = 3-hydroxyindolin-2-one + NADP(+). In terms of biological role, NADPH-dependent oxidoreductase which catalyzes the reduction of a variety of compounds bearing carbonyl groups including ketosteroids, alpha-dicarbonyl compounds, aldehydes, aromatic ketones and quinones. Reduces all-trans-retinal and 9-cis retinal. Reduces 3-ketosteroids and benzil into 3alpha-hydroxysteroids and S-benzoin, respectively, in contrast to the stereoselectivity of primates DHRS4s which produce 3beta-hydroxysteroids and R-benzoin. In the reverse reaction, catalyzes the NADP-dependent oxidation of 3alpha-hydroxysteroids and alcohol, but with much lower efficiency. Involved in the metabolism of 3alpha-hydroxysteroids, retinoid, isatin and xenobiotic carbonyl compounds. The polypeptide is Dehydrogenase/reductase SDR family member 4 (Mus musculus (Mouse)).